A 416-amino-acid chain; its full sequence is Exodeoxyribonuclease 7 large subunit (416 aa).

It belongs to the XseA family. As to quaternary structure, heterooligomer composed of large and small subunits.

It localises to the cytoplasm. The enzyme catalyses Exonucleolytic cleavage in either 5'- to 3'- or 3'- to 5'-direction to yield nucleoside 5'-phosphates.. In terms of biological role, bidirectionally degrades single-stranded DNA into large acid-insoluble oligonucleotides, which are then degraded further into small acid-soluble oligonucleotides. In Nitratiruptor sp. (strain SB155-2), this protein is Exodeoxyribonuclease 7 large subunit.